The primary structure comprises 152 residues: Erythema protein SVEP (152 aa).

The first 18 residues, 1 to 18 (MSITQSFFVLTLAIFGAA), serve as a signal peptide directing secretion.

In terms of tissue distribution, salivary gland (at protein level).

Its subcellular location is the secreted. Functionally, salivary vasoactive peptide; induces vasodilatation in bioassay with rabbit aortic rings. This is Erythema protein SVEP from Simulium vittatum (Striped black fly).